Reading from the N-terminus, the 331-residue chain is ADP-L-glycero-D-manno-heptose-6-epimerase (331 aa).

NADP(+) is bound by residues 11–12 (FI), 32–33 (DN), K39, K54, 75–79 (EGACS), and N92. Y139 functions as the Proton acceptor in the catalytic mechanism. K143 lines the NADP(+) pocket. Residue N168 coordinates substrate. Positions 169 and 177 each coordinate NADP(+). K177 serves as the catalytic Proton acceptor. Substrate is bound by residues R179, H186, 200–203 (FGEY), R213, and Y292.

This sequence belongs to the NAD(P)-dependent epimerase/dehydratase family. HldD subfamily. Homopentamer. Requires NADP(+) as cofactor.

It catalyses the reaction ADP-D-glycero-beta-D-manno-heptose = ADP-L-glycero-beta-D-manno-heptose. Its pathway is nucleotide-sugar biosynthesis; ADP-L-glycero-beta-D-manno-heptose biosynthesis; ADP-L-glycero-beta-D-manno-heptose from D-glycero-beta-D-manno-heptose 7-phosphate: step 4/4. In terms of biological role, catalyzes the interconversion between ADP-D-glycero-beta-D-manno-heptose and ADP-L-glycero-beta-D-manno-heptose via an epimerization at carbon 6 of the heptose. In Ralstonia pickettii (strain 12J), this protein is ADP-L-glycero-D-manno-heptose-6-epimerase.